The primary structure comprises 641 residues: MKIVDLIDKIPNGNAFYSFEYFPPKTTVGLENLSSRITRMSRNMMPLFSSVTWGTAGSTAEVSIYLAKMLEQHHKIPACLHLTCTNVDKAIIDKALETAKEYGIRNILALRGDPPLNSDHWEGKVSEFEHAVDLVRYIREKYGDYFCIGVAAYPEGHVDSNVPELSKDPLRDIPFLIEKVEAGADFIITQIFYEPEAFIKFENFVRNHSSNALRNIPIIPAIMPIQSYGSLKRMTRLCGCSVPSSLMQRLNAAKPDDEAIKNIGVEHIVDMIKKIMDNVQGRVHGFHFCTLNLERSVALILKNSGLLTKRWKQVESEMEDEKLLRTTRKRLSLDEPAELHNQVVVPSQQPVADKSSNLFVTSKQSSVSGHKDNLTEEAPFSVSEGSGVLGRQANWDDFTNGRFGDPRSPAYGEIDGYGPTLHFPPSEALKLWGYPVDESDITSLFQKHIMSDISAIPWIDEPVEVETKTIAKYLLKLNGNSWWTVGSQPAVNGAPSADPVFGWGPKGGRVFQKAFVECFVNGKDLKDFITKWHDNPQVTYYAGNNKSEFLTNAPKDGASAVTWGVYPGREIIQSTIIAEVSFKAWLSESFQVWGEWANLYSKNTPSRKLLENCINDRWLVTVIHHDFMDKNGLWKVLEIDF.

The Proton donor/acceptor role is filled by E20. Residues 20–25 and 52–53 each bind NAD(+); these read EYFPPK and TW. FAD contacts are provided by residues 52-53, H81, 111-113, Y153, D172, and K179; these read TW and RGD. Residue D113 participates in substrate binding. Residue Q190 coordinates substrate.

It belongs to the methylenetetrahydrofolate reductase family. Requires FAD as cofactor.

It catalyses the reaction (6S)-5-methyl-5,6,7,8-tetrahydrofolate + NADP(+) = (6R)-5,10-methylene-5,6,7,8-tetrahydrofolate + NADPH + H(+). It participates in one-carbon metabolism; tetrahydrofolate interconversion. In terms of biological role, major methylenetetrahydrofolate reductase required to generate the methyl groups necessary for methionine synthetase to convert homocysteine to methionine. Performs 15 to 20 percent of the total methylenetetrahydrofolate reductase activity of the cells. This Schizosaccharomyces pombe (strain 972 / ATCC 24843) (Fission yeast) protein is Methylenetetrahydrofolate reductase 2 (met11).